Consider the following 275-residue polypeptide: Formamidopyrimidine-DNA glycosylase (275 aa).

The active-site Schiff-base intermediate with DNA is Pro2. Glu3 (proton donor) is an active-site residue. Lys58 (proton donor; for beta-elimination activity) is an active-site residue. Positions 91, 109, and 154 each coordinate DNA. The FPG-type zinc finger occupies 240–274 (AVYERAGLPCRVCGAPIRRLVQGQRATYFCPSCQK). The active-site Proton donor; for delta-elimination activity is the Arg264.

It belongs to the FPG family. Monomer. The cofactor is Zn(2+).

It carries out the reaction Hydrolysis of DNA containing ring-opened 7-methylguanine residues, releasing 2,6-diamino-4-hydroxy-5-(N-methyl)formamidopyrimidine.. It catalyses the reaction 2'-deoxyribonucleotide-(2'-deoxyribose 5'-phosphate)-2'-deoxyribonucleotide-DNA = a 3'-end 2'-deoxyribonucleotide-(2,3-dehydro-2,3-deoxyribose 5'-phosphate)-DNA + a 5'-end 5'-phospho-2'-deoxyribonucleoside-DNA + H(+). Functionally, involved in base excision repair of DNA damaged by oxidation or by mutagenic agents. Acts as a DNA glycosylase that recognizes and removes damaged bases. Has a preference for oxidized purines, such as 7,8-dihydro-8-oxoguanine (8-oxoG). Has AP (apurinic/apyrimidinic) lyase activity and introduces nicks in the DNA strand. Cleaves the DNA backbone by beta-delta elimination to generate a single-strand break at the site of the removed base with both 3'- and 5'-phosphates. This is Formamidopyrimidine-DNA glycosylase from Bordetella parapertussis (strain 12822 / ATCC BAA-587 / NCTC 13253).